The following is a 67-amino-acid chain: Conotoxin LiC33 (67 aa).

The N-terminal stretch at 1–22 is a signal peptide; sequence MRCVPVFIILLLLSPSAPSVDA. A propeptide spanning residues 23-48 is cleaved from the precursor; it reads HPKTKDDVPLASFHDDAKRTLQRLWI. Residue Phe63 is modified to Phenylalanine amide. A propeptide spanning residues 65–67 is cleaved from the precursor; the sequence is KGK.

The protein belongs to the conotoxin T superfamily. In terms of processing, contains 2 disulfide bonds that can be either 'C1-C3, C2-C4' or 'C1-C4, C2-C3', since these disulfide connectivities have been observed for conotoxins with cysteine framework V (for examples, see AC P0DQQ7 and AC P81755). In terms of tissue distribution, expressed by the venom duct.

It is found in the secreted. The polypeptide is Conotoxin LiC33 (Conus lividus (Livid cone)).